Here is a 215-residue protein sequence, read N- to C-terminus: Adenylate kinase (215 aa).

Position 10 to 15 (10 to 15 (GSGKGT)) interacts with ATP. Residues 30 to 59 (STGDILREHVRNGTELGKEAKKYMDAGQLV) form an NMP region. AMP is bound by residues threonine 31, arginine 36, 57-59 (QLV), 85-88 (GYPR), and glutamine 92. The segment at 126–162 (GRRMCKCGRSYHIIFNPPKVPGKCDECGGELYHRDDD) is LID. ATP is bound at residue arginine 127. Zn(2+) contacts are provided by cysteine 130 and cysteine 132. 135–136 (SY) serves as a coordination point for ATP. Positions 149 and 152 each coordinate Zn(2+). 2 residues coordinate AMP: arginine 159 and arginine 170. Glycine 198 provides a ligand contact to ATP.

The protein belongs to the adenylate kinase family. Monomer.

Its subcellular location is the cytoplasm. It carries out the reaction AMP + ATP = 2 ADP. The protein operates within purine metabolism; AMP biosynthesis via salvage pathway; AMP from ADP: step 1/1. Functionally, catalyzes the reversible transfer of the terminal phosphate group between ATP and AMP. Plays an important role in cellular energy homeostasis and in adenine nucleotide metabolism. In Methanothrix thermoacetophila (strain DSM 6194 / JCM 14653 / NBRC 101360 / PT) (Methanosaeta thermophila), this protein is Adenylate kinase.